Here is a 135-residue protein sequence, read N- to C-terminus: Galectin-1 (135 aa).

Ala-2 is modified (N-acetylalanine). Residues 4 to 135 (GLVASNLNLK…DFKIKCVAFE (132 aa)) enclose the Galectin domain. Residues Lys-13, Lys-19, and Lys-29 each carry the N6-acetyllysine modification. Phosphoserine is present on Ser-30. A beta-D-galactoside is bound by residues 45–49 (HFNPR), His-53, Asn-62, and 69–72 (WGTE). Lys-108 is subject to N6-acetyllysine; alternate. Lys-108 carries the post-translational modification N6-succinyllysine; alternate. Lys-128 carries the N6-acetyllysine modification.

Binds LGALS3BP. Interacts with CD2, CD3, CD4, CD6, CD7, CD43, ALCAM and CD45. Interacts with laminin. Interacts with SUSD2. Exists in a reversible and active monomer-homodimer equilibrium, the mononomer/dimer state is regulated by lectin concentration. Interacts with cargo receptor TMED10; the interaction mediates the translocation from the cytoplasm into the ERGIC (endoplasmic reticulum-Golgi intermediate compartment) and thereby secretion.

It is found in the cytoplasm. Its subcellular location is the secreted. The protein resides in the extracellular space. The protein localises to the extracellular matrix. Lectin that binds beta-galactoside and a wide array of complex carbohydrates. Plays a role in regulating apoptosis, cell proliferation and cell differentiation. Inhibits CD45 protein phosphatase activity and therefore the dephosphorylation of Lyn kinase. Strong inducer of T-cell apoptosis. The polypeptide is Galectin-1 (LGALS1) (Cricetulus griseus (Chinese hamster)).